We begin with the raw amino-acid sequence, 183 residues long: Ferritin light chain 1 (183 aa).

The 150-residue stretch at 7 to 156 folds into the Ferritin-like diiron domain; that stretch reads QNYSTEVEAA…NHLTNLRRVA (150 aa). Residues glutamate 54, glutamate 57, glutamate 58, glutamate 61, and glutamate 64 each coordinate Fe cation.

The protein belongs to the ferritin family. In terms of assembly, oligomer of 24 subunits. There are two types of subunits: L (light) chain and H (heavy) chain. The major chain can be light or heavy, depending on the species and tissue type. The functional molecule forms a roughly spherical shell with a diameter of 12 nm and contains a central cavity into which the insoluble mineral iron core is deposited. Interacts with NCOA4.

It is found in the cytoplasm. The protein resides in the cytoplasmic vesicle. The protein localises to the autophagosome. Its subcellular location is the autolysosome. Stores iron in a soluble, non-toxic, readily available form. Important for iron homeostasis. Iron is taken up in the ferrous form and deposited as ferric hydroxides after oxidation. Also plays a role in delivery of iron to cells. Mediates iron uptake in capsule cells of the developing kidney. Degraded to release iron upon autophagy activation by nutrient starvation. This Mus musculus (Mouse) protein is Ferritin light chain 1 (Ftl1).